Reading from the N-terminus, the 150-residue chain is Arginine repressor (150 aa).

It belongs to the ArgR family.

The protein localises to the cytoplasm. It participates in amino-acid biosynthesis; L-arginine biosynthesis [regulation]. Functionally, regulates arginine biosynthesis genes. In Clostridium botulinum (strain 657 / Type Ba4), this protein is Arginine repressor.